Consider the following 291-residue polypeptide: ATP synthase gamma chain (291 aa).

It belongs to the ATPase gamma chain family. F-type ATPases have 2 components, CF(1) - the catalytic core - and CF(0) - the membrane proton channel. CF(1) has five subunits: alpha(3), beta(3), gamma(1), delta(1), epsilon(1). CF(0) has three main subunits: a, b and c.

The protein resides in the cell inner membrane. Its function is as follows. Produces ATP from ADP in the presence of a proton gradient across the membrane. The gamma chain is believed to be important in regulating ATPase activity and the flow of protons through the CF(0) complex. The protein is ATP synthase gamma chain of Neisseria meningitidis serogroup C (strain 053442).